The following is a 178-amino-acid chain: Probable inosine/xanthosine triphosphatase (178 aa).

The protein belongs to the YjjX NTPase family. As to quaternary structure, homodimer. Mg(2+) serves as cofactor. Mn(2+) is required as a cofactor.

It carries out the reaction XTP + H2O = XDP + phosphate + H(+). The catalysed reaction is ITP + H2O = IDP + phosphate + H(+). Phosphatase that hydrolyzes non-canonical purine nucleotides such as XTP and ITP to their respective diphosphate derivatives. Probably excludes non-canonical purines from DNA/RNA precursor pool, thus preventing their incorporation into DNA/RNA and avoiding chromosomal lesions. The sequence is that of Probable inosine/xanthosine triphosphatase from Pyrobaculum calidifontis (strain DSM 21063 / JCM 11548 / VA1).